A 427-amino-acid polypeptide reads, in one-letter code: Enolase (427 aa).

Residue Gln-162 coordinates (2R)-2-phosphoglycerate. Glu-204 (proton donor) is an active-site residue. Mg(2+) is bound by residues Asp-241, Glu-282, and Asp-309. Residues Lys-334, Arg-363, Ser-364, and Lys-385 each coordinate (2R)-2-phosphoglycerate. Lys-334 acts as the Proton acceptor in catalysis.

The protein belongs to the enolase family. Requires Mg(2+) as cofactor.

The protein resides in the cytoplasm. Its subcellular location is the secreted. It localises to the cell surface. The enzyme catalyses (2R)-2-phosphoglycerate = phosphoenolpyruvate + H2O. It functions in the pathway carbohydrate degradation; glycolysis; pyruvate from D-glyceraldehyde 3-phosphate: step 4/5. In terms of biological role, catalyzes the reversible conversion of 2-phosphoglycerate (2-PG) into phosphoenolpyruvate (PEP). It is essential for the degradation of carbohydrates via glycolysis. The protein is Enolase of Frankia casuarinae (strain DSM 45818 / CECT 9043 / HFP020203 / CcI3).